A 618-amino-acid chain; its full sequence is Chaperone protein DnaK (618 aa).

Thr175 carries the phosphothreonine; by autocatalysis modification. A disordered region spans residues 576–618; it reads SQNAEPGADGGANSGANPGGTTGNTDTKDDNVVDAEYKVDDDK. The segment covering 583 to 597 has biased composition (gly residues); that stretch reads ADGGANSGANPGGTT. A compositionally biased stretch (basic and acidic residues) spans 601-618; the sequence is DTKDDNVVDAEYKVDDDK.

The protein belongs to the heat shock protein 70 family.

Acts as a chaperone. The polypeptide is Chaperone protein DnaK (Clostridium kluyveri (strain NBRC 12016)).